The primary structure comprises 224 residues: 2-C-methyl-D-erythritol 4-phosphate cytidylyltransferase (224 aa).

It belongs to the IspD/TarI cytidylyltransferase family. IspD subfamily.

The enzyme catalyses 2-C-methyl-D-erythritol 4-phosphate + CTP + H(+) = 4-CDP-2-C-methyl-D-erythritol + diphosphate. The protein operates within isoprenoid biosynthesis; isopentenyl diphosphate biosynthesis via DXP pathway; isopentenyl diphosphate from 1-deoxy-D-xylulose 5-phosphate: step 2/6. Its function is as follows. Catalyzes the formation of 4-diphosphocytidyl-2-C-methyl-D-erythritol from CTP and 2-C-methyl-D-erythritol 4-phosphate (MEP). The chain is 2-C-methyl-D-erythritol 4-phosphate cytidylyltransferase from Bordetella petrii (strain ATCC BAA-461 / DSM 12804 / CCUG 43448).